A 71-amino-acid polypeptide reads, in one-letter code: DNA-directed RNA polymerase subunit epsilon (71 aa).

The protein belongs to the RNA polymerase subunit epsilon family. In terms of assembly, RNAP is composed of a core of 2 alpha, a beta and a beta' subunit. The core is associated with a delta subunit, and at least one of epsilon or omega. When a sigma factor is associated with the core the holoenzyme is formed, which can initiate transcription.

The catalysed reaction is RNA(n) + a ribonucleoside 5'-triphosphate = RNA(n+1) + diphosphate. Its function is as follows. A non-essential component of RNA polymerase (RNAP). This chain is DNA-directed RNA polymerase subunit epsilon, found in Anoxybacillus flavithermus (strain DSM 21510 / WK1).